Here is a 307-residue protein sequence, read N- to C-terminus: Quinolinate synthase (307 aa).

2 residues coordinate iminosuccinate: H20 and S37. [4Fe-4S] cluster is bound at residue C82. Residues 108 to 110 (YIN) and S125 each bind iminosuccinate. C168 provides a ligand contact to [4Fe-4S] cluster. Residues 194–196 (HPE) and T219 contribute to the iminosuccinate site. A [4Fe-4S] cluster-binding site is contributed by C264.

It belongs to the quinolinate synthase family. Type 2 subfamily. Requires [4Fe-4S] cluster as cofactor.

Its subcellular location is the cytoplasm. The enzyme catalyses iminosuccinate + dihydroxyacetone phosphate = quinolinate + phosphate + 2 H2O + H(+). It participates in cofactor biosynthesis; NAD(+) biosynthesis; quinolinate from iminoaspartate: step 1/1. Catalyzes the condensation of iminoaspartate with dihydroxyacetone phosphate to form quinolinate. This chain is Quinolinate synthase, found in Pyrobaculum aerophilum (strain ATCC 51768 / DSM 7523 / JCM 9630 / CIP 104966 / NBRC 100827 / IM2).